Reading from the N-terminus, the 178-residue chain is Ribonuclease M5 (178 aa).

Residues 10–103 (DGVIVCEGKT…NSTKIGVAEA (94 aa)) enclose the Toprim domain. Mg(2+) is bound by residues Glu16, Asp62, and Asp64.

This sequence belongs to the ribonuclease M5 family. It depends on Mg(2+) as a cofactor.

It localises to the cytoplasm. The enzyme catalyses Endonucleolytic cleavage of RNA, removing 21 and 42 nucleotides, respectively, from the 5'- and 3'-termini of a 5S-rRNA precursor.. Functionally, required for correct processing of both the 5' and 3' ends of 5S rRNA precursor. Cleaves both sides of a double-stranded region yielding mature 5S rRNA in one step. This Mycoplasma pneumoniae (strain ATCC 29342 / M129 / Subtype 1) (Mycoplasmoides pneumoniae) protein is Ribonuclease M5.